The chain runs to 101 residues: Small ribosomal subunit protein uS14 (101 aa).

The protein belongs to the universal ribosomal protein uS14 family. Part of the 30S ribosomal subunit. Contacts proteins S3 and S10.

Its function is as follows. Binds 16S rRNA, required for the assembly of 30S particles and may also be responsible for determining the conformation of the 16S rRNA at the A site. The chain is Small ribosomal subunit protein uS14 from Aliivibrio salmonicida (strain LFI1238) (Vibrio salmonicida (strain LFI1238)).